The primary structure comprises 178 residues: Large ribosomal subunit protein uL10 (178 aa).

The protein belongs to the universal ribosomal protein uL10 family. In terms of assembly, part of the ribosomal stalk of the 50S ribosomal subunit. The N-terminus interacts with L11 and the large rRNA to form the base of the stalk. The C-terminus forms an elongated spine to which L12 dimers bind in a sequential fashion forming a multimeric L10(L12)X complex.

In terms of biological role, forms part of the ribosomal stalk, playing a central role in the interaction of the ribosome with GTP-bound translation factors. In Petrotoga mobilis (strain DSM 10674 / SJ95), this protein is Large ribosomal subunit protein uL10.